Here is a 281-residue protein sequence, read N- to C-terminus: Leukocyte antigen CD37 (281 aa).

Residues 1–17 lie on the Cytoplasmic side of the membrane; that stretch reads MSAQESCLSLIKYFLFV. Residues 18 to 38 form a helical membrane-spanning segment; the sequence is FNLFFFVLGGLIFCFGTWILI. Over 39–59 the chain is Extracellular; sequence DKTSFVSFVGLSFVPLQTWSK. The chain crosses the membrane as a helical span at residues 60 to 74; that stretch reads VLSVSGVLTMALALL. The Cytoplasmic portion of the chain corresponds to 75–85; it reads GCVGALKELRC. The helical transmembrane segment at 86 to 111 threads the bilayer; sequence LLGLYFGMLLLLFATQITLGILISTQ. The Extracellular portion of the chain corresponds to 112–241; it reads RVRLERRVQE…RSLQKWLHNN (130 aa). N-linked (GlcNAc...) asparagine glycans are attached at residues N170, N183, and N188. A helical transmembrane segment spans residues 242–266; it reads IISIVGICLGVGLLELGFMTLSIFL. Residues 267–281 are Cytoplasmic-facing; it reads CRNLDHVYDRLARYR.

This sequence belongs to the tetraspanin (TM4SF) family. As to quaternary structure, interacts with SCIMP. Interacts with SOCS3. Interacts with DECTIN1/CLEC7A. Tyrosine phosphorylated; leading to activation of downstream signaling pathways. As to expression, B-lymphocytes.

The protein resides in the cell membrane. Structural component of specialized membrane microdomains known as tetraspanin-enriched microdomains (TERMs), which act as platforms for receptor clustering and signaling. Participates thereby in diverse biological functions such as cell signal transduction, adhesion, migration and protein trafficking. Upon ligand binding, two signaling pathways are activated, one acting through phosphorylation by LYN leading to cell death or a survival pathway with activation of GSK3B. Plays an essential role essential for clustering of integrin ITGA4/ITGB1 and promotes its mobility in the plasma membrane of B-cells. In turn, participates in ITGA4/ITGB1 integrin-mediated antiapoptotic signaling through AKT. Plays also a role in the migration of dendritic cells and neutrophils to draining lymph nodes, as well as in their integrin-mediated adhesion. Negatively regulates IL-6 responses through direct interaction with SOCS3 thereby preventing constitutive IL-6 signaling. Alternatively, inhibition of IL-6 signaling can also occur via interaction and stabilization of DECTIN1/CLEC7A at the cell membrane to inhibit its ability to promote the production of IL-6. The protein is Leukocyte antigen CD37 (Cd37) of Rattus norvegicus (Rat).